Here is a 970-residue protein sequence, read N- to C-terminus: Protein translocase subunit SecA (970 aa).

ATP is bound by residues glutamine 99, 117–121, and aspartate 631; that span reads GEGKT.

This sequence belongs to the SecA family. In terms of assembly, monomer and homodimer. Part of the essential Sec protein translocation apparatus which comprises SecA, SecYEG and auxiliary proteins SecDF. Other proteins may also be involved.

The protein localises to the cell inner membrane. It localises to the cytoplasm. It catalyses the reaction ATP + H2O + cellular proteinSide 1 = ADP + phosphate + cellular proteinSide 2.. Its function is as follows. Part of the Sec protein translocase complex. Interacts with the SecYEG preprotein conducting channel. Has a central role in coupling the hydrolysis of ATP to the transfer of proteins into and across the cell membrane, serving as an ATP-driven molecular motor driving the stepwise translocation of polypeptide chains across the membrane. The polypeptide is Protein translocase subunit SecA (Chlamydia pneumoniae (Chlamydophila pneumoniae)).